The following is a 265-amino-acid chain: Small ribosomal subunit protein eS4 (265 aa).

The S4 RNA-binding domain maps to 42 to 104 (LPLILIIRNR…TGENYRLLYD (63 aa)).

Belongs to the eukaryotic ribosomal protein eS4 family.

The protein localises to the cytoplasm. The sequence is that of Small ribosomal subunit protein eS4 (RPS4) from Oryza sativa subsp. japonica (Rice).